The chain runs to 298 residues: Protein Bel-1 (298 aa).

Basic and acidic residues predominate over residues Met1–Glu17. Residues Met1 to Glu46 form a disordered region. The DNA-binding element occupies Ser91–Ala200. A Nuclear localization signal motif is present at residues Ala214–Gly223. The segment at Ala225–Asn298 is transactivation domain.

Homodimer or homomultimer. Forms complexes with the host nuclear factors NFIA, NFIB, NFIC or NFIX.

The protein localises to the host nucleus. Its function is as follows. Transcriptional transactivator that activates the viral internal promoter (IP), thereby enhancing its own expression. This transactivation is repressed by nuclear factor I. Also transactivates the long terminal repeat (LTR) promoter, thereby inducing structural gene expression, initiating the late phase of infection. It is therefore a key regulator of viral gene expression. It directly binds to and activates DNA target sites of viral promoters and those of distinct cellular genes. Required for viral replication. The protein is Protein Bel-1 (bel1) of Chlorocebus aethiops (Green monkey).